Here is a 189-residue protein sequence, read N- to C-terminus: Early E3 20.5 kDa glycoprotein (189 aa).

Asn-73 and Asn-137 each carry an N-linked (GlcNAc...) asparagine; by host glycan.

The protein belongs to the adenoviridae E3_20 family.

E3 proteins seem to be dispensable for virus growth in tissue culture cells. They are potentially important for virus growth under special conditions; E3 region may help adenoviruses to evade the immune surveillance of the host. This is Early E3 20.5 kDa glycoprotein from Human adenovirus B serotype 3 (HAdV-3).